Consider the following 87-residue polypeptide: Small ribosomal subunit protein bS20 (87 aa).

The interval methionine 1 to serine 26 is disordered.

The protein belongs to the bacterial ribosomal protein bS20 family.

Its function is as follows. Binds directly to 16S ribosomal RNA. The protein is Small ribosomal subunit protein bS20 of Escherichia coli O17:K52:H18 (strain UMN026 / ExPEC).